The following is a 386-amino-acid chain: Manganese dependent endoglucanase Eg5A (386 aa).

The signal sequence occupies residues 1–17 (MLKYASIALALATLGVA). A CBM1 domain is found at 18-53 (QQQQWGQCGGIGWTGATTCVAGSVCSVLNPYYSQCI). Glutamate 209 functions as the Proton donor in the catalytic mechanism. Residue glutamate 319 is the Nucleophile of the active site. Asparagine 324 carries N-linked (GlcNAc...) asparagine glycosylation.

The protein belongs to the glycosyl hydrolase 5 (cellulase A) family. The cofactor is Mn(2+).

The protein resides in the secreted. The catalysed reaction is Endohydrolysis of (1-&gt;4)-beta-D-glucosidic linkages in cellulose, lichenin and cereal beta-D-glucans.. Functionally, secreted manganese dependent endoglucanase that acts by cleaving the beta-1,4-glucose linkage. Exhibits high activity toward carboxymethyl-cellulose (CMC), barley glucan, and glucomannan. Displays low activity on larminarin and xyloglucan but does not hydrolyze hemicellulose substrates such as birchwood xylan, arabinoxylan, and arabinan. This Phanerodontia chrysosporium (White-rot fungus) protein is Manganese dependent endoglucanase Eg5A.